The chain runs to 328 residues: Beta-ketoacyl-[acyl-carrier-protein] synthase III (328 aa).

Catalysis depends on residues C122 and H255. The tract at residues Q256–R260 is ACP-binding. N285 is an active-site residue.

Belongs to the thiolase-like superfamily. FabH family. In terms of assembly, homodimer.

It localises to the cytoplasm. It carries out the reaction malonyl-[ACP] + acetyl-CoA + H(+) = 3-oxobutanoyl-[ACP] + CO2 + CoA. It functions in the pathway lipid metabolism; fatty acid biosynthesis. Its function is as follows. Catalyzes the condensation reaction of fatty acid synthesis by the addition to an acyl acceptor of two carbons from malonyl-ACP. Catalyzes the first condensation reaction which initiates fatty acid synthesis and may therefore play a role in governing the total rate of fatty acid production. Possesses both acetoacetyl-ACP synthase and acetyl transacylase activities. Its substrate specificity determines the biosynthesis of branched-chain and/or straight-chain of fatty acids. In Bordetella pertussis (strain Tohama I / ATCC BAA-589 / NCTC 13251), this protein is Beta-ketoacyl-[acyl-carrier-protein] synthase III.